The sequence spans 323 residues: Beta-ketoacyl-[acyl-carrier-protein] synthase III (323 aa).

Catalysis depends on residues cysteine 114 and histidine 250. Residues glutamine 251–arginine 255 form an ACP-binding region. Asparagine 280 is an active-site residue.

Belongs to the thiolase-like superfamily. FabH family. As to quaternary structure, homodimer.

It localises to the cytoplasm. The enzyme catalyses malonyl-[ACP] + acetyl-CoA + H(+) = 3-oxobutanoyl-[ACP] + CO2 + CoA. It functions in the pathway lipid metabolism; fatty acid biosynthesis. In terms of biological role, catalyzes the condensation reaction of fatty acid synthesis by the addition to an acyl acceptor of two carbons from malonyl-ACP. Catalyzes the first condensation reaction which initiates fatty acid synthesis and may therefore play a role in governing the total rate of fatty acid production. Possesses both acetoacetyl-ACP synthase and acetyl transacylase activities. Its substrate specificity determines the biosynthesis of branched-chain and/or straight-chain of fatty acids. This is Beta-ketoacyl-[acyl-carrier-protein] synthase III from Ruegeria sp. (strain TM1040) (Silicibacter sp.).